The primary structure comprises 349 residues: Galanin receptor type 1 (349 aa).

The Extracellular portion of the chain corresponds to 1–36; sequence MELAVGNLSEGNASWPEPPAPEPGPLFGIGVENFVT. 2 N-linked (GlcNAc...) asparagine glycosylation sites follow: asparagine 7 and asparagine 12. The chain crosses the membrane as a helical span at residues 37 to 57; that stretch reads LVVFGLIFALGVLGNSLVITV. Over 58–70 the chain is Cytoplasmic; that stretch reads LARSKPGKPRSTT. The helical transmembrane segment at 71–91 threads the bilayer; the sequence is NLFILNLSIADLAYLLFCIPF. The Extracellular portion of the chain corresponds to 92-109; it reads QATVYALPTWVLGAFICK. Cysteines 108 and 187 form a disulfide. A helical transmembrane segment spans residues 110–131; it reads FIHYFFTVSMLVSIFTLAAMSV. Over 132–151 the chain is Cytoplasmic; it reads DRYVAIVHSRRSSSLRVSRN. The helical transmembrane segment at 152–172 threads the bilayer; the sequence is ALLGVGCIWALSIAMASPVAY. Residues 173–200 are Extracellular-facing; that stretch reads HQGLFHPRASNQTFCWEQWPDPRHKKAY. An N-linked (GlcNAc...) asparagine glycan is attached at asparagine 183. The chain crosses the membrane as a helical span at residues 201–221; it reads VVCTFVFGYLLPLLLICFCYA. Topologically, residues 222 to 248 are cytoplasmic; that stretch reads KVLNHLHKKLKNMSKKSEASKKKTAQT. Residues 249-269 form a helical membrane-spanning segment; that stretch reads VLVVVVVFGISWLPHHIIHLW. At 270-271 the chain is on the extracellular side; sequence AE. Residues 272 to 292 traverse the membrane as a helical segment; that stretch reads FGVFPLTPASFLFRITAHCLA. The Cytoplasmic segment spans residues 293–349; that stretch reads YSNSSVNPIIYAFLSENFRKAYKQVFKCHIRKDSHLSDTKESKSRIDTPPSTNCTHV. Residue cysteine 320 is the site of S-palmitoyl cysteine attachment.

This sequence belongs to the G-protein coupled receptor 1 family. Interacts with GRP39 AND HTR1A. Post-translationally, palmitoylated on at least one of the three cysteine residues present in the C-terminal part.

The protein resides in the cell membrane. Receptor for the hormone galanin. The activity of this receptor is mediated by G proteins that inhibit adenylate cyclase activity. The protein is Galanin receptor type 1 (GALR1) of Homo sapiens (Human).